The chain runs to 83 residues: Mitochondrial import inner membrane translocase subunit Tim8 (83 aa).

The Twin CX3C motif signature appears at 35-60 (CWDVCFSDYRPPSKMDGKTQTCIQNC). Cystine bridges form between C35/C60 and C39/C56.

It belongs to the small Tim family. Heterohexamer; composed of 3 copies of ddp-1/tim-8 and 3 copies of tin-13/tim-13, named soluble 70 kDa complex. Associates with the TIM22 complex, whose core is composed of tim-22.

Its subcellular location is the mitochondrion inner membrane. In terms of biological role, mitochondrial intermembrane chaperone that participates in the import and insertion of some multi-pass transmembrane proteins into the mitochondrial inner membrane. Also required for the transfer of beta-barrel precursors from the TOM complex to the sorting and assembly machinery (SAM complex) of the outer membrane. Acts as a chaperone-like protein that protects the hydrophobic precursors from aggregation and guide them through the mitochondrial intermembrane space. The ddp-1/tim-8-tim-13 complex mediates the import of some proteins while the predominant tim-9/tin-9.1-tim-10/tin-10 70 kDa complex mediates the import of much more proteins. The sequence is that of Mitochondrial import inner membrane translocase subunit Tim8 from Caenorhabditis briggsae.